The following is a 313-amino-acid chain: Catalase-related peroxidase (313 aa).

Residue His-28 is part of the active site. Heme is bound at residue Tyr-294.

This sequence belongs to the catalase family. In terms of assembly, monomer. Requires heme as cofactor.

Has an organic peroxide-dependent peroxidase activity. Exhibits strong peroxidase activity using organic hydroperoxides as cosubstrates, weak peroxidase activity using hydrogen peroxide and negligible catalase activity. May have a role in elimination of reactive oxygen species, in particular by deactivating hydroperoxides. The polypeptide is Catalase-related peroxidase (Mycolicibacterium paratuberculosis (strain ATCC BAA-968 / K-10) (Mycobacterium paratuberculosis)).